We begin with the raw amino-acid sequence, 264 residues long: 3-methyl-2-oxobutanoate hydroxymethyltransferase (264 aa).

Mg(2+)-binding residues include D45 and D84. Residues 45 to 46 (DS), D84, and K112 contribute to the 3-methyl-2-oxobutanoate site. Residue E114 coordinates Mg(2+). E181 (proton acceptor) is an active-site residue.

This sequence belongs to the PanB family. As to quaternary structure, homodecamer; pentamer of dimers. Mg(2+) serves as cofactor.

It is found in the cytoplasm. It carries out the reaction 3-methyl-2-oxobutanoate + (6R)-5,10-methylene-5,6,7,8-tetrahydrofolate + H2O = 2-dehydropantoate + (6S)-5,6,7,8-tetrahydrofolate. It functions in the pathway cofactor biosynthesis; (R)-pantothenate biosynthesis; (R)-pantoate from 3-methyl-2-oxobutanoate: step 1/2. Functionally, catalyzes the reversible reaction in which hydroxymethyl group from 5,10-methylenetetrahydrofolate is transferred onto alpha-ketoisovalerate to form ketopantoate. This chain is 3-methyl-2-oxobutanoate hydroxymethyltransferase, found in Shigella boydii serotype 18 (strain CDC 3083-94 / BS512).